Consider the following 307-residue polypeptide: Peroxisomal protein PEX21 (307 aa).

Residue cysteine 4 forms a Glycyl cysteine thioester (Cys-Gly) (interchain with G-Cter in ubiquitin) linkage. Residues 23–52 are disordered; that stretch reads VGRVGGFNRPSGGLGQSSAEQQLQARAGER.

The protein belongs to the peroxin-21 family. In terms of assembly, interacts with PEX7. Post-translationally, monoubiquitinated at Cys-4; acts as a signal for PEX21 extraction and is required for proper export from peroxisomes and recycling.

The protein resides in the cytoplasm. It localises to the cytosol. It is found in the peroxisome. In terms of biological role, mediates peroxisomal import of proteins containing a C-terminal PTS2-type peroxisomal targeting signal via its interaction with PEX7. Interaction with PEX7 only takes place when PEX7 is associated with cargo proteins containing a PTS2 peroxisomal targeting signal. PEX7 along with PTS2-containing cargo proteins are then translocated through the PEX13-PEX14 docking complex together with PEX21. In Eremothecium gossypii (strain ATCC 10895 / CBS 109.51 / FGSC 9923 / NRRL Y-1056) (Yeast), this protein is Peroxisomal protein PEX21 (PEX21).